Here is a 493-residue protein sequence, read N- to C-terminus: Cell division protein FtsA (493 aa).

A disordered region spans residues 434 to 468 (AHQSNPTPHIHSSPTERNLSDLKTPSAPLNTAKND). Over residues 436–465 (QSNPTPHIHSSPTERNLSDLKTPSAPLNTA) the composition is skewed to polar residues.

The protein belongs to the FtsA/MreB family. As to quaternary structure, self-interacts. Interacts with FtsZ.

It localises to the cell inner membrane. Its function is as follows. Cell division protein that is involved in the assembly of the Z ring. May serve as a membrane anchor for the Z ring. The polypeptide is Cell division protein FtsA (Helicobacter pylori (strain J99 / ATCC 700824) (Campylobacter pylori J99)).